A 151-amino-acid chain; its full sequence is Large ribosomal subunit protein bL9 (151 aa).

The protein belongs to the bacterial ribosomal protein bL9 family.

In terms of biological role, binds to the 23S rRNA. The polypeptide is Large ribosomal subunit protein bL9 (Prochlorococcus marinus (strain MIT 9215)).